Consider the following 452-residue polypeptide: Maltoporin (452 aa).

The N-terminal stretch at 1-25 (MMITLRKLPLAVAVAAGVMSAQAMA) is a signal peptide.

This sequence belongs to the porin LamB (TC 1.B.3) family. As to quaternary structure, homotrimer formed of three 18-stranded antiparallel beta-barrels, containing three independent channels.

It localises to the cell outer membrane. The enzyme catalyses beta-maltose(in) = beta-maltose(out). Functionally, involved in the transport of maltose and maltodextrins. The sequence is that of Maltoporin from Salmonella agona (strain SL483).